The primary structure comprises 232 residues: MSLTDTIRNTFVPIHREGYPFIAGFFVVSLILGWLWDPLFWIGMVLTVWCIYFYRDPERVTPMDDDLVISPADGKVSFVGPAVPPAELDLGAEPRMRVSVFMNVFSVHINRSPVRGKIEKVVHRPGKFLNAELDKASTENERNSVLIESPHGKIGVVQIAGLVARRIVCWSNEDDDLSVGERFGLIRFGSRVDVYLPADATVRVAVGQTAVAGETVLADYGSVRGEPVVRIG.

Serine 190 acts as the Schiff-base intermediate with substrate; via pyruvic acid in catalysis. At serine 190 the chain carries Pyruvic acid (Ser); by autocatalysis.

The protein belongs to the phosphatidylserine decarboxylase family. PSD-A subfamily. Heterodimer of a large membrane-associated beta subunit and a small pyruvoyl-containing alpha subunit. Pyruvate serves as cofactor. In terms of processing, is synthesized initially as an inactive proenzyme. Formation of the active enzyme involves a self-maturation process in which the active site pyruvoyl group is generated from an internal serine residue via an autocatalytic post-translational modification. Two non-identical subunits are generated from the proenzyme in this reaction, and the pyruvate is formed at the N-terminus of the alpha chain, which is derived from the carboxyl end of the proenzyme. The post-translation cleavage follows an unusual pathway, termed non-hydrolytic serinolysis, in which the side chain hydroxyl group of the serine supplies its oxygen atom to form the C-terminus of the beta chain, while the remainder of the serine residue undergoes an oxidative deamination to produce ammonia and the pyruvoyl prosthetic group on the alpha chain.

The protein localises to the cell membrane. The enzyme catalyses a 1,2-diacyl-sn-glycero-3-phospho-L-serine + H(+) = a 1,2-diacyl-sn-glycero-3-phosphoethanolamine + CO2. It participates in phospholipid metabolism; phosphatidylethanolamine biosynthesis; phosphatidylethanolamine from CDP-diacylglycerol: step 2/2. Its function is as follows. Catalyzes the formation of phosphatidylethanolamine (PtdEtn) from phosphatidylserine (PtdSer). This chain is Phosphatidylserine decarboxylase proenzyme, found in Brucella anthropi (strain ATCC 49188 / DSM 6882 / CCUG 24695 / JCM 21032 / LMG 3331 / NBRC 15819 / NCTC 12168 / Alc 37) (Ochrobactrum anthropi).